Here is a 353-residue protein sequence, read N- to C-terminus: Quinolinate synthase (353 aa).

2 residues coordinate iminosuccinate: His47 and Ser68. A [4Fe-4S] cluster-binding site is contributed by Cys113. Residues 139–141 and Ser156 each bind iminosuccinate; that span reads YAN. Cys200 provides a ligand contact to [4Fe-4S] cluster. Iminosuccinate-binding positions include 226–228 and Thr243; that span reads HPE. Cys297 lines the [4Fe-4S] cluster pocket.

It belongs to the quinolinate synthase family. Type 1 subfamily. The cofactor is [4Fe-4S] cluster.

The protein localises to the cytoplasm. The catalysed reaction is iminosuccinate + dihydroxyacetone phosphate = quinolinate + phosphate + 2 H2O + H(+). It functions in the pathway cofactor biosynthesis; NAD(+) biosynthesis; quinolinate from iminoaspartate: step 1/1. Functionally, catalyzes the condensation of iminoaspartate with dihydroxyacetone phosphate to form quinolinate. This Vibrio vulnificus (strain CMCP6) protein is Quinolinate synthase.